Consider the following 127-residue polypeptide: Probable glycine cleavage system H protein (127 aa).

The Lipoyl-binding domain maps to 24 to 106 (TAEVGITAFA…FGDGWMLTVE (83 aa)). N6-lipoyllysine is present on K65.

Belongs to the GcvH family. The glycine cleavage system is composed of four proteins: P, T, L and H. The cofactor is (R)-lipoate.

In terms of biological role, the glycine cleavage system catalyzes the degradation of glycine. The H protein shuttles the methylamine group of glycine from the P protein to the T protein. This chain is Probable glycine cleavage system H protein, found in Haloarcula marismortui (strain ATCC 43049 / DSM 3752 / JCM 8966 / VKM B-1809) (Halobacterium marismortui).